The following is a 334-amino-acid chain: MDSMKRFYFFALSILLILALIIWMGPSRIIRAVYMADWMIIAIALLIHMGVLAVRGLRWGFIIGQPWRMRVNFMVKTIGLFAGNLSPMRSAGEVMNALAGKKLNGIELSEGLSAGLTERFFDLGIGGGLLLLAAVMVPVIRVIALFGAILSVLITYLIYLVNWREEKGLRIYQRIHSIIERLPVSEETLENLYERLTSGIKGMIGYTRSYSNFTSLGVIFILSLLSWLMECLRLYLVFMAFGVETSFSAVIIIFLLANLVGILSALPGGMGSMEVSMAGLFVVFGVPGFLAGSIALVDRIISFWMVTALGAIFSSCYAGEIFDEVRSYILDIRA.

8 helical membrane passes run 7 to 27 (FYFF…MGPS), 33 to 53 (VYMA…GVLA), 120 to 140 (FFDL…VPVI), 142 to 162 (VIAL…YLVN), 218 to 238 (VIFI…YLVF), 247 to 267 (FSAV…SALP), 277 to 297 (MAGL…IALV), and 300 to 320 (IISF…YAGE).

The protein belongs to the UPF0104 family.

Its subcellular location is the cell membrane. In Methanothermobacter thermautotrophicus (strain ATCC 29096 / DSM 1053 / JCM 10044 / NBRC 100330 / Delta H) (Methanobacterium thermoautotrophicum), this protein is UPF0104 membrane protein MTH_378.